The primary structure comprises 208 residues: Ribosomal RNA large subunit methyltransferase E (208 aa).

Residues Gly63, Trp65, Asp83, Asp99, and Asp124 each coordinate S-adenosyl-L-methionine. The Proton acceptor role is filled by Lys164.

Belongs to the class I-like SAM-binding methyltransferase superfamily. RNA methyltransferase RlmE family.

Its subcellular location is the cytoplasm. The catalysed reaction is uridine(2552) in 23S rRNA + S-adenosyl-L-methionine = 2'-O-methyluridine(2552) in 23S rRNA + S-adenosyl-L-homocysteine + H(+). Specifically methylates the uridine in position 2552 of 23S rRNA at the 2'-O position of the ribose in the fully assembled 50S ribosomal subunit. In Salmonella paratyphi A (strain ATCC 9150 / SARB42), this protein is Ribosomal RNA large subunit methyltransferase E.